Here is an 836-residue protein sequence, read N- to C-terminus: ATP-binding cassette sub-family B member 6 (836 aa).

At 1-26 (MVTVGNYCEAEGPAGPAWTQNGLSPC) the chain is on the lumenal side. Residues 1-205 (MVTVGNYCEA…SGGLFILGLW (205 aa)) form a required for the lysosomal targeting region. Positions 1–236 (MVTVGNYCEA…RNQGRSTDPR (236 aa)) are required for ATPase activity. A disulfide bond links C8 and C26. A helical membrane pass occupies residues 27 to 47 (FFYTLVPSTLMTLGVLALVLV). Residues 48 to 72 (LPCRRREVPAGTEELSWAAGPRVAP) are Cytoplasmic-facing. A helical membrane pass occupies residues 73–93 (YALQLSLAILQMALPLASLAG). Residues 94-106 (RVGTARGVRLPGY) are Lumenal-facing. Residues 107–127 (LLLASVLESLASACGLWLLVV) form a helical membrane-spanning segment. Over 128–147 (ERSQARQSLAMGVWMKFRHS) the chain is Cytoplasmic. Residues 148 to 168 (LGLLLLWTVTFAAENLVLVSW) traverse the membrane as a helical segment. The Lumenal segment spans residues 169–185 (NSPQWWWSRADLGQQVQ). A helical membrane pass occupies residues 186-206 (FGLWVLRYMTSGGLFILGLWA). The Cytoplasmic segment spans residues 207–264 (PGLRPQSYTLHVNEEDQDGGRNQGRSTDPRSTWRDLGRKLRLLSGYLWPRGSPSLQLT). A helical membrane pass occupies residues 265-285 (VLLCMGLMGLDRALNVLVPIF). The ABC transmembrane type-1 domain occupies 265–556 (VLLCMGLMGL…FGTYYRMIQT (292 aa)). Residues 286–305 (YRDIVNLLTSKAPWSSLAWT) lie on the Lumenal side of the membrane. A helical membrane pass occupies residues 306–326 (VTTYVFLKFLQGGGTGSTGFV). At 327 to 375 (SNLRTFLWIRVQQFTSRGVELRLFSHLHELSLRWHLGRRTGEVLRIVDR) the chain is on the cytoplasmic side. Residues 376-396 (GTSSVTGLLSYLVFNIIPTLA) form a helical membrane-spanning segment. Position 397 (D397) is a topological domain, lumenal. A helical transmembrane segment spans residues 398–418 (IIIGIIYFSMFFNAWFGLIVF). Over 419–499 (LCMSLYLILT…STASLVLLNQ (81 aa)) the chain is Cytoplasmic. The helical transmembrane segment at 500 to 520 (TQNMVIGFGLLAGSLLCAYFV) threads the bilayer. The Lumenal segment spans residues 521–529 (SERRLQVGD). A helical transmembrane segment spans residues 530–550 (FVLFGTYITQLYMPLNWFGTY). The Cytoplasmic portion of the chain corresponds to 551–836 (YRMIQTNFID…QGQETVPEDS (286 aa)). The region spanning 590–824 (VEFENVHFSY…GGVYAEMWQL (235 aa)) is the ABC transporter domain. ATP contacts are provided by residues Y599 and 623 to 634 (GPSGAGKSTILR).

This sequence belongs to the ABC transporter superfamily. ABCB family. Heavy Metal importer (TC 3.A.1.210) subfamily. In terms of assembly, homodimer. Post-translationally, N-glycosylated. Ubiquitously expressed. Highly expressed in testis by meiotic pachytene spermatocytes and post-meiotic early spermatids.

Its subcellular location is the cell membrane. It is found in the mitochondrion outer membrane. The protein localises to the endoplasmic reticulum membrane. The protein resides in the golgi apparatus membrane. It localises to the endosome membrane. Its subcellular location is the lysosome membrane. It is found in the late endosome membrane. The protein localises to the early endosome membrane. The protein resides in the secreted. It localises to the extracellular exosome. Its subcellular location is the mitochondrion. It is found in the endosome. The protein localises to the multivesicular body membrane. The protein resides in the melanosome membrane. It carries out the reaction heme b(in) + ATP + H2O = heme b(out) + ADP + phosphate + H(+). It catalyses the reaction coproporphyrin III(in) + ATP + H2O = coproporphyrin III(out) + ADP + phosphate + H(+). The catalysed reaction is pheophorbide a(in) + ATP + H2O = pheophorbide a(out) + ADP + phosphate + H(+). The enzyme catalyses coproporphyrinogen III(in) + ATP + H2O = coproporphyrinogen III(out) + ADP + phosphate + H(+). It carries out the reaction protoporphyrin IX(in) + ATP + H2O = protoporphyrin IX(out) + ADP + phosphate + H(+). It catalyses the reaction coproporphyrin I(in) + ATP + H2O = coproporphyrin I(out) + ADP + phosphate + H(+). The catalysed reaction is uroporphyrin I(in) + ATP + H2O = uroporphyrin I(out) + ADP + phosphate + H(+). The enzyme catalyses uroporphyrin III(in) + ATP + H2O = uroporphyrin III(out) + ADP + phosphate + H(+). Its function is as follows. ATP-dependent transporter that catalyzes the transport of a broad-spectrum of porphyrins from the cytoplasm to the extracellular space through the plasma membrane or into the vesicle lumen. May also function as an ATP-dependent importer of porphyrins from the cytoplasm into the mitochondria, in turn may participate in the de novo heme biosynthesis regulation and in the coordination of heme and iron homeostasis during phenylhydrazine stress. May play a key role in the early steps of melanogenesis producing PMEL amyloid fibrils. In vitro, it confers to cells a resistance to toxic metal such as arsenic and cadmium and against chemotherapeutics agent such as 5-fluorouracil, SN-38 and vincristin. In addition may play a role in the transition metal homeostasis. The sequence is that of ATP-binding cassette sub-family B member 6 from Rattus norvegicus (Rat).